The primary structure comprises 397 residues: Exodeoxyribonuclease 7 large subunit (397 aa).

This sequence belongs to the XseA family. In terms of assembly, heterooligomer composed of large and small subunits.

The protein localises to the cytoplasm. The enzyme catalyses Exonucleolytic cleavage in either 5'- to 3'- or 3'- to 5'-direction to yield nucleoside 5'-phosphates.. In terms of biological role, bidirectionally degrades single-stranded DNA into large acid-insoluble oligonucleotides, which are then degraded further into small acid-soluble oligonucleotides. In Anaplasma marginale (strain St. Maries), this protein is Exodeoxyribonuclease 7 large subunit.